The primary structure comprises 85 residues: Small ribosomal subunit protein bS18 (85 aa).

Belongs to the bacterial ribosomal protein bS18 family. As to quaternary structure, part of the 30S ribosomal subunit. Forms a tight heterodimer with protein bS6.

Functionally, binds as a heterodimer with protein bS6 to the central domain of the 16S rRNA, where it helps stabilize the platform of the 30S subunit. The protein is Small ribosomal subunit protein bS18 of Helicobacter pylori (strain P12).